The chain runs to 357 residues: Putative F-box protein At5g50220 (357 aa).

Positions isoleucine 27–serine 73 constitute an F-box domain.

This chain is Putative F-box protein At5g50220, found in Arabidopsis thaliana (Mouse-ear cress).